The chain runs to 146 residues: Transcription antitermination protein NusB (146 aa).

It belongs to the NusB family.

Its function is as follows. Involved in transcription antitermination. Required for transcription of ribosomal RNA (rRNA) genes. Binds specifically to the boxA antiterminator sequence of the ribosomal RNA (rrn) operons. The polypeptide is Transcription antitermination protein NusB (Herpetosiphon aurantiacus (strain ATCC 23779 / DSM 785 / 114-95)).